The chain runs to 198 residues: Protoplast secreted protein 2 (198 aa).

Positions 1–21 are cleaved as a signal peptide; sequence MPRVAIIIYTLYGHVAATAEA. The Flavodoxin-like domain occupies 22–191; sequence EKKGIEAAGG…QVHEIQGKTF (170 aa).

This sequence belongs to the WrbA family.

Its subcellular location is the secreted. The sequence is that of Protoplast secreted protein 2 (PST2) from Saccharomyces cerevisiae (strain ATCC 204508 / S288c) (Baker's yeast).